The chain runs to 356 residues: S-adenosylmethionine:tRNA ribosyltransferase-isomerase (356 aa).

The protein belongs to the QueA family. In terms of assembly, monomer.

Its subcellular location is the cytoplasm. It carries out the reaction 7-aminomethyl-7-carbaguanosine(34) in tRNA + S-adenosyl-L-methionine = epoxyqueuosine(34) in tRNA + adenine + L-methionine + 2 H(+). It participates in tRNA modification; tRNA-queuosine biosynthesis. Its function is as follows. Transfers and isomerizes the ribose moiety from AdoMet to the 7-aminomethyl group of 7-deazaguanine (preQ1-tRNA) to give epoxyqueuosine (oQ-tRNA). The polypeptide is S-adenosylmethionine:tRNA ribosyltransferase-isomerase (Escherichia coli O6:K15:H31 (strain 536 / UPEC)).